The chain runs to 430 residues: Tyrosine--tRNA ligase (430 aa).

Residue Y32 coordinates L-tyrosine. The 'HIGH' region motif lies at 37–46 (PTADSLHIGH). Y172 and Q176 together coordinate L-tyrosine. The 'KMSKS' region motif lies at 232 to 236 (KFGKT). Residue K235 participates in ATP binding. In terms of domain architecture, S4 RNA-binding spans 362–430 (ISLVDLLADA…KKSYYLIIVE (69 aa)).

Belongs to the class-I aminoacyl-tRNA synthetase family. TyrS type 1 subfamily. As to quaternary structure, homodimer.

The protein resides in the cytoplasm. It catalyses the reaction tRNA(Tyr) + L-tyrosine + ATP = L-tyrosyl-tRNA(Tyr) + AMP + diphosphate + H(+). Its function is as follows. Catalyzes the attachment of tyrosine to tRNA(Tyr) in a two-step reaction: tyrosine is first activated by ATP to form Tyr-AMP and then transferred to the acceptor end of tRNA(Tyr). This Porphyromonas gingivalis (strain ATCC BAA-308 / W83) protein is Tyrosine--tRNA ligase.